A 695-amino-acid polypeptide reads, in one-letter code: ATP-dependent DNA helicase II subunit 2 (695 aa).

Residues F229–D461 enclose the Ku domain.

The protein belongs to the ku80 family. Heterodimer of pku70 and pku80.

The protein resides in the nucleus. The protein localises to the chromosome. Its subcellular location is the telomere. It catalyses the reaction ATP + H2O = ADP + phosphate + H(+). In terms of biological role, single-stranded DNA-dependent ATP-dependent helicase. Involved in non-homologous end joining (NHEJ) DNA double strand break repair. DNA-binding is sequence-independent but has a high affinity to nicks in double-stranded DNA and to the ends of duplex DNA. Binds to naturally occurring chromosomal ends, and therefore provides chromosomal end protection. Required also for telomere recombination to repair telomeric ends in the absence of telomerase. ku70, of the ku70/ku80 heterodimer, binds to the stem loop of tlc1, the RNA component of telomerase. Involved in telomere maintenance. Interacts with telomeric repeats and subtelomeric sequences thereby controlling telomere length and protecting against subtelomeric rearrangement. Required for mating-type switching. The protein is ATP-dependent DNA helicase II subunit 2 (pku80) of Schizosaccharomyces pombe (strain 972 / ATCC 24843) (Fission yeast).